A 245-amino-acid chain; its full sequence is tRNA pseudouridine synthase A (245 aa).

Catalysis depends on D52, which acts as the Nucleophile. Y111 contributes to the substrate binding site.

Belongs to the tRNA pseudouridine synthase TruA family. Homodimer.

The enzyme catalyses uridine(38/39/40) in tRNA = pseudouridine(38/39/40) in tRNA. Functionally, formation of pseudouridine at positions 38, 39 and 40 in the anticodon stem and loop of transfer RNAs. In Wolbachia pipientis wMel, this protein is tRNA pseudouridine synthase A.